Here is a 226-residue protein sequence, read N- to C-terminus: Enolase-phosphatase E1 (226 aa).

The protein belongs to the HAD-like hydrolase superfamily. MasA/MtnC family. In terms of assembly, monomer. Mg(2+) is required as a cofactor.

The enzyme catalyses 5-methylsulfanyl-2,3-dioxopentyl phosphate + H2O = 1,2-dihydroxy-5-(methylsulfanyl)pent-1-en-3-one + phosphate. Its pathway is amino-acid biosynthesis; L-methionine biosynthesis via salvage pathway; L-methionine from S-methyl-5-thio-alpha-D-ribose 1-phosphate: step 3/6. The protein operates within amino-acid biosynthesis; L-methionine biosynthesis via salvage pathway; L-methionine from S-methyl-5-thio-alpha-D-ribose 1-phosphate: step 4/6. Bifunctional enzyme that catalyzes the enolization of 2,3-diketo-5-methylthiopentyl-1-phosphate (DK-MTP-1-P) into the intermediate 2-hydroxy-3-keto-5-methylthiopentenyl-1-phosphate (HK-MTPenyl-1-P), which is then dephosphorylated to form the acireductone 1,2-dihydroxy-3-keto-5-methylthiopentene (DHK-MTPene). The polypeptide is Enolase-phosphatase E1 (Shewanella sp. (strain MR-4)).